Here is a 146-residue protein sequence, read N- to C-terminus: Large ribosomal subunit protein uL15y (146 aa).

Basic residues-rich tracts occupy residues 1–14 and 21–30; these read MATA…KRGH and RIGKHRKHPG. The segment at 1–38 is disordered; that stretch reads MATALKKNRKKRGHVSAGHGRIGKHRKHPGGRGNAGGM.

This sequence belongs to the universal ribosomal protein uL15 family.

This is Large ribosomal subunit protein uL15y (RPL27AB) from Arabidopsis thaliana (Mouse-ear cress).